The primary structure comprises 139 residues: MAMTVHCDIVSAERQLFSGLVEIVVASGVEGDLGIMPGHAPLLTRLKPGPVRVKKQNGEEEVFYVSGGFLEVQPKLVTVLADTAERAENMDAAEAERAKARAKEALEGKSSEMDYSRAAATLIEAVAQLRAIQQLKNKR.

This sequence belongs to the ATPase epsilon chain family. As to quaternary structure, F-type ATPases have 2 components, CF(1) - the catalytic core - and CF(0) - the membrane proton channel. CF(1) has five subunits: alpha(3), beta(3), gamma(1), delta(1), epsilon(1). CF(0) has three main subunits: a, b and c.

The protein resides in the cell inner membrane. Its function is as follows. Produces ATP from ADP in the presence of a proton gradient across the membrane. This chain is ATP synthase epsilon chain, found in Alcanivorax borkumensis (strain ATCC 700651 / DSM 11573 / NCIMB 13689 / SK2).